The primary structure comprises 513 residues: GMP synthase [glutamine-hydrolyzing] (513 aa).

Positions 9-198 constitute a Glutamine amidotransferase type-1 domain; sequence LILVLDFGSQ…IREICKCTGE (190 aa). The active-site Nucleophile is Cys86. Catalysis depends on residues His172 and Glu174. The region spanning 199 to 388 is the GMPS ATP-PPase domain; the sequence is WTMENFIEIE…LGIPEHLVWR (190 aa). 226–232 lines the ATP pocket; it reads SGGVDSS.

As to quaternary structure, homodimer.

It catalyses the reaction XMP + L-glutamine + ATP + H2O = GMP + L-glutamate + AMP + diphosphate + 2 H(+). Its pathway is purine metabolism; GMP biosynthesis; GMP from XMP (L-Gln route): step 1/1. In terms of biological role, catalyzes the synthesis of GMP from XMP. This chain is GMP synthase [glutamine-hydrolyzing], found in Macrococcus caseolyticus (strain JCSC5402) (Macrococcoides caseolyticum).